Consider the following 411-residue polypeptide: LL-diaminopimelate aminotransferase (411 aa).

2 residues coordinate substrate: tyrosine 15 and glycine 42. Pyridoxal 5'-phosphate contacts are provided by residues tyrosine 72, 108 to 109, tyrosine 132, asparagine 188, tyrosine 219, and 247 to 249; these read AK and SFS. 3 residues coordinate substrate: lysine 109, tyrosine 132, and asparagine 188. Lysine 250 carries the post-translational modification N6-(pyridoxal phosphate)lysine. Arginine 258 and asparagine 293 together coordinate pyridoxal 5'-phosphate. Asparagine 293 and arginine 389 together coordinate substrate.

Belongs to the class-I pyridoxal-phosphate-dependent aminotransferase family. LL-diaminopimelate aminotransferase subfamily. As to quaternary structure, homodimer. It depends on pyridoxal 5'-phosphate as a cofactor.

It catalyses the reaction (2S,6S)-2,6-diaminopimelate + 2-oxoglutarate = (S)-2,3,4,5-tetrahydrodipicolinate + L-glutamate + H2O + H(+). It participates in amino-acid biosynthesis; L-lysine biosynthesis via DAP pathway; LL-2,6-diaminopimelate from (S)-tetrahydrodipicolinate (aminotransferase route): step 1/1. In terms of biological role, involved in the synthesis of meso-diaminopimelate (m-DAP or DL-DAP), required for both lysine and peptidoglycan biosynthesis. Catalyzes the direct conversion of tetrahydrodipicolinate to LL-diaminopimelate. Is also able to catalyze the reverse reaction in vitro, i.e. the transamination of LL-diaminopimelate with 2-oxoglutarate to produce tetrahydrodipicolinate and glutamate. Can also use m-DAP instead of LL-DAP as the amino-group donor, and oxaloacetate or pyruvate as the amino-group acceptor. This is LL-diaminopimelate aminotransferase from Desulfitobacterium hafniense (strain DSM 10664 / DCB-2).